We begin with the raw amino-acid sequence, 429 residues long: Phosphoribosylamine--glycine ligase (429 aa).

The ATP-grasp domain occupies lysine 109–aspartate 316. Leucine 135–serine 196 provides a ligand contact to ATP. Residues methionine 209–glycine 231 are disordered. 2 residues coordinate Mg(2+): glutamate 286 and asparagine 288.

The protein belongs to the GARS family. Requires Mg(2+) as cofactor. Mn(2+) is required as a cofactor.

The enzyme catalyses 5-phospho-beta-D-ribosylamine + glycine + ATP = N(1)-(5-phospho-beta-D-ribosyl)glycinamide + ADP + phosphate + H(+). It participates in purine metabolism; IMP biosynthesis via de novo pathway; N(1)-(5-phospho-D-ribosyl)glycinamide from 5-phospho-alpha-D-ribose 1-diphosphate: step 2/2. The protein is Phosphoribosylamine--glycine ligase of Pasteurella multocida (strain Pm70).